A 374-amino-acid polypeptide reads, in one-letter code: Queuine tRNA-ribosyltransferase (374 aa).

Asp-89 (proton acceptor) is an active-site residue. Substrate-binding positions include 89–93 (DSGGF), Asp-143, Gln-187, and Gly-214. Residues 245-251 (GVGKPED) form an RNA binding region. The Nucleophile role is filled by Asp-264. The interval 269–273 (TRNAR) is RNA binding; important for wobble base 34 recognition. Zn(2+) is bound by residues Cys-302, Cys-304, Cys-307, and His-333.

It belongs to the queuine tRNA-ribosyltransferase family. Homodimer. Within each dimer, one monomer is responsible for RNA recognition and catalysis, while the other monomer binds to the replacement base PreQ1. Zn(2+) is required as a cofactor.

It carries out the reaction 7-aminomethyl-7-carbaguanine + guanosine(34) in tRNA = 7-aminomethyl-7-carbaguanosine(34) in tRNA + guanine. It participates in tRNA modification; tRNA-queuosine biosynthesis. Catalyzes the base-exchange of a guanine (G) residue with the queuine precursor 7-aminomethyl-7-deazaguanine (PreQ1) at position 34 (anticodon wobble position) in tRNAs with GU(N) anticodons (tRNA-Asp, -Asn, -His and -Tyr). Catalysis occurs through a double-displacement mechanism. The nucleophile active site attacks the C1' of nucleotide 34 to detach the guanine base from the RNA, forming a covalent enzyme-RNA intermediate. The proton acceptor active site deprotonates the incoming PreQ1, allowing a nucleophilic attack on the C1' of the ribose to form the product. After dissociation, two additional enzymatic reactions on the tRNA convert PreQ1 to queuine (Q), resulting in the hypermodified nucleoside queuosine (7-(((4,5-cis-dihydroxy-2-cyclopenten-1-yl)amino)methyl)-7-deazaguanosine). The protein is Queuine tRNA-ribosyltransferase of Shewanella oneidensis (strain ATCC 700550 / JCM 31522 / CIP 106686 / LMG 19005 / NCIMB 14063 / MR-1).